The primary structure comprises 482 residues: Chromosome stability protein 9 (482 aa).

Disordered regions lie at residues 239 to 263 (SSLRNSSKNNNGTVTPSTSGRVNKN) and 418 to 482 (SGLA…RRIR). Residues 240–249 (SLRNSSKNNN) are compositionally biased toward low complexity. A compositionally biased stretch (polar residues) spans 250 to 263 (GTVTPSTSGRVNKN). Positions 418-437 (SGLAFSSSSNSLQQSKLPKS) are enriched in low complexity. Polar residues-rich tracts occupy residues 440–453 (LKRSNSTQQLTNTH) and 463–473 (RSSNTVLGSSK).

Component of the synapsis initiation complex composed of at least ZIP2, ZIP3, MSH4 and MSH5. Also interacts with ZIP1, MRE11, RAD51 and RAD53.

The protein resides in the nucleus. The protein localises to the chromosome. Functionally, component of the synapsis initiation complex (SIC) necessary for the synaptonemal complex assembly. Stabilizes the ZIP2 component to the chromosomes. The SIC complex loads onto chromosomes and nucleates ZIP1 polymerization, a molecular zipper that acts to bring homologous chromosomes in close apposition, which is required for meiotic crossover. May also be involved in double strand break repair. The protein is Chromosome stability protein 9 (CST9) of Saccharomyces cerevisiae (strain ATCC 204508 / S288c) (Baker's yeast).